The primary structure comprises 279 residues: tRNA-cytidine(32) 2-sulfurtransferase (279 aa).

The PP-loop motif signature appears at 46–51; sequence SGGKDS. Positions 121, 124, and 212 each coordinate [4Fe-4S] cluster.

This sequence belongs to the TtcA family. Homodimer. Mg(2+) is required as a cofactor. It depends on [4Fe-4S] cluster as a cofactor.

The protein resides in the cytoplasm. The catalysed reaction is cytidine(32) in tRNA + S-sulfanyl-L-cysteinyl-[cysteine desulfurase] + AH2 + ATP = 2-thiocytidine(32) in tRNA + L-cysteinyl-[cysteine desulfurase] + A + AMP + diphosphate + H(+). It functions in the pathway tRNA modification. Functionally, catalyzes the ATP-dependent 2-thiolation of cytidine in position 32 of tRNA, to form 2-thiocytidine (s(2)C32). The sulfur atoms are provided by the cysteine/cysteine desulfurase (IscS) system. The chain is tRNA-cytidine(32) 2-sulfurtransferase from Marinomonas sp. (strain MWYL1).